We begin with the raw amino-acid sequence, 280 residues long: Energy-coupling factor transporter ATP-binding protein EcfA1 (280 aa).

One can recognise an ABC transporter domain in the interval 6 to 241; that stretch reads LRTENISFQY…SHMLQEIGLD (236 aa). 40–47 provides a ligand contact to ATP; sequence GQNGSGKS.

It belongs to the ABC transporter superfamily. Energy-coupling factor EcfA family. Forms a stable energy-coupling factor (ECF) transporter complex composed of 2 membrane-embedded substrate-binding proteins (S component), 2 ATP-binding proteins (A component) and 2 transmembrane proteins (T component).

The protein resides in the cell membrane. Its function is as follows. ATP-binding (A) component of a common energy-coupling factor (ECF) ABC-transporter complex. Unlike classic ABC transporters this ECF transporter provides the energy necessary to transport a number of different substrates. The sequence is that of Energy-coupling factor transporter ATP-binding protein EcfA1 from Bacillus cereus (strain ATCC 10987 / NRS 248).